The following is a 117-amino-acid chain: Large-conductance mechanosensitive channel (117 aa).

3 helical membrane-spanning segments follow: residues 7–27 (EFAL…GAAF), 30–50 (IVTS…FGSV), and 64–84 (GLFI…FIFV).

It belongs to the MscL family. As to quaternary structure, homopentamer.

It localises to the cell membrane. Its function is as follows. Channel that opens in response to stretch forces in the membrane lipid bilayer. May participate in the regulation of osmotic pressure changes within the cell. The sequence is that of Large-conductance mechanosensitive channel from Staphylococcus haemolyticus (strain JCSC1435).